Reading from the N-terminus, the 334-residue chain is Retinol dehydrogenase 13 (334 aa).

Serine 2 bears the N-acetylserine mark. 45-51 (GANTGIG) is an NADP(+) binding site. Serine 174 provides a ligand contact to substrate. The active-site Proton acceptor is the tyrosine 200.

This sequence belongs to the short-chain dehydrogenases/reductases (SDR) family.

It localises to the mitochondrion inner membrane. The catalysed reaction is all-trans-retinol + NADP(+) = all-trans-retinal + NADPH + H(+). The protein operates within cofactor metabolism; retinol metabolism. Its function is as follows. Retinol dehydrogenase with a clear preference for NADP. Oxidizes all-trans-retinol, but seems to reduce all-trans-retinal with much higher efficiency. Has no activity towards steroid. The polypeptide is Retinol dehydrogenase 13 (Rdh13) (Mus musculus (Mouse)).